We begin with the raw amino-acid sequence, 435 residues long: Methylenetetrahydrofolate--tRNA-(uracil-5-)-methyltransferase TrmFO (435 aa).

Position 7–12 (7–12 (GAGLAG)) interacts with FAD.

The protein belongs to the MnmG family. TrmFO subfamily. Requires FAD as cofactor.

It is found in the cytoplasm. The catalysed reaction is uridine(54) in tRNA + (6R)-5,10-methylene-5,6,7,8-tetrahydrofolate + NADH + H(+) = 5-methyluridine(54) in tRNA + (6S)-5,6,7,8-tetrahydrofolate + NAD(+). It carries out the reaction uridine(54) in tRNA + (6R)-5,10-methylene-5,6,7,8-tetrahydrofolate + NADPH + H(+) = 5-methyluridine(54) in tRNA + (6S)-5,6,7,8-tetrahydrofolate + NADP(+). Functionally, catalyzes the folate-dependent formation of 5-methyl-uridine at position 54 (M-5-U54) in all tRNAs. The chain is Methylenetetrahydrofolate--tRNA-(uracil-5-)-methyltransferase TrmFO from Thermotoga maritima (strain ATCC 43589 / DSM 3109 / JCM 10099 / NBRC 100826 / MSB8).